The primary structure comprises 78 residues: DNA-directed RNA polymerase subunit Rpo5 (78 aa).

This sequence belongs to the archaeal Rpo5/eukaryotic RPB5 RNA polymerase subunit family. In terms of assembly, part of the RNA polymerase complex.

The protein resides in the cytoplasm. It catalyses the reaction RNA(n) + a ribonucleoside 5'-triphosphate = RNA(n+1) + diphosphate. DNA-dependent RNA polymerase (RNAP) catalyzes the transcription of DNA into RNA using the four ribonucleoside triphosphates as substrates. This chain is DNA-directed RNA polymerase subunit Rpo5, found in Methanococcus maripaludis (strain C6 / ATCC BAA-1332).